Here is a 236-residue protein sequence, read N- to C-terminus: Predicted GPI-anchored protein 43 (236 aa).

A signal peptide spans 1-24 (MHQRNHHSILLTLLLYLQSIVALA). Asn-192, Asn-195, and Asn-198 each carry an N-linked (GlcNAc...) asparagine glycan. Residue Gly-208 is the site of GPI-anchor amidated glycine attachment. Residues 209 to 236 (SVCLTSSYLNSPIIILCAILTGTLFAMY) constitute a propeptide, removed in mature form.

It is found in the cell membrane. The sequence is that of Predicted GPI-anchored protein 43 (PGA43) from Candida albicans (strain SC5314 / ATCC MYA-2876) (Yeast).